Consider the following 61-residue polypeptide: Alpha-conotoxine-like Am1.4 (61 aa).

Positions 1 to 21 (MGMRMMFTVFLLVVLATTVVS) are cleaved as a signal peptide. Positions 22 to 44 (FMSGRASHGRNAAASDLIALTIK) are excised as a propeptide.

The protein belongs to the conotoxin A superfamily. In terms of processing, is not hydroxylated. Post-translationally, contains 2 disulfide bonds. In terms of tissue distribution, expressed by the venom duct.

Its subcellular location is the secreted. Its function is as follows. Alpha-conotoxins act on postsynaptic membranes, they bind to the nicotinic acetylcholine receptors (nAChR) and thus inhibit them. The protein is Alpha-conotoxine-like Am1.4 of Conus amadis (Amadis cone).